Here is a 282-residue protein sequence, read N- to C-terminus: MPTAANLLAIMPFPDIDPIAFSIGPLAIHWYGLAYVAGILLGWAYARRLAANESLWPGNASPMTRTQLDDFIVWAALGVVLGGRLGYIFFYDLPAVLRSPVRALEIWNGGMSFHGGLTGTTIAMIIFARRNGIPIWSLFDIVATVVPFGLFFGRIANFINGELWGRLTDVPWAVVFPTGGPFARHPSQLYEAGLEGIVLLLVLAALVYGMRALKSPGFITGVFVCGYALSRIFVEFFREPDAQLGYLLGTNWLTMGMVLSSPMILLGLWAMLRARRQAALQL.

Helical transmembrane passes span 23–43 (IGPLAIHWYGLAYVAGILLGW), 71–91 (FIVWAALGVVLGGRLGYIFFY), 106–126 (IWNGGMSFHGGLTGTTIAMII), and 132–152 (GIPIWSLFDIVATVVPFGLFF). An a 1,2-diacyl-sn-glycero-3-phospho-(1'-sn-glycerol)-binding site is contributed by arginine 154. 3 helical membrane-spanning segments follow: residues 189–209 (LYEAGLEGIVLLLVLAALVYG), 217–237 (GFITGVFVCGYALSRIFVEFF), and 252–272 (WLTMGMVLSSPMILLGLWAML).

It belongs to the Lgt family.

The protein resides in the cell inner membrane. It catalyses the reaction L-cysteinyl-[prolipoprotein] + a 1,2-diacyl-sn-glycero-3-phospho-(1'-sn-glycerol) = an S-1,2-diacyl-sn-glyceryl-L-cysteinyl-[prolipoprotein] + sn-glycerol 1-phosphate + H(+). It participates in protein modification; lipoprotein biosynthesis (diacylglyceryl transfer). In terms of biological role, catalyzes the transfer of the diacylglyceryl group from phosphatidylglycerol to the sulfhydryl group of the N-terminal cysteine of a prolipoprotein, the first step in the formation of mature lipoproteins. In Rhizobium leguminosarum bv. trifolii (strain WSM2304), this protein is Phosphatidylglycerol--prolipoprotein diacylglyceryl transferase.